The sequence spans 48 residues: Small polypeptide DEVIL 14 (48 aa).

Residues 4–23 form a helical membrane-spanning segment; the sequence is TVVLRCCTSVTKVRTWKRCS. The tract at residues 17-48 is required for DVL/RTFL small polypeptide activity; that stretch reads RTWKRCSKQIKEQRARLYIIWKCAVFLLSSHD.

This sequence belongs to the DVL/RTFL small polypeptides family.

It localises to the cell membrane. Its function is as follows. Small polypeptide acting as a regulatory molecule which coordinates cellular responses required for differentiation, growth and development, probably by restricting polar cell proliferation in lateral organs and coordinating socket cell recruitment and differentiation at trichome sites. This chain is Small polypeptide DEVIL 14, found in Arabidopsis thaliana (Mouse-ear cress).